Consider the following 181-residue polypeptide: Copper-resistant cuproprotein CopI (181 aa).

The N-terminal stretch at 1-24 is a signal peptide; it reads MFPRRLLPASLIVLGVLFGASAQA. 4 residues coordinate Cu(2+): His-79, Cys-163, His-168, and Met-173.

Belongs to the CopI family.

The protein resides in the periplasm. In terms of biological role, involved in copper tolerance. The protein is Copper-resistant cuproprotein CopI of Pseudomonas aeruginosa (strain ATCC 15692 / DSM 22644 / CIP 104116 / JCM 14847 / LMG 12228 / 1C / PRS 101 / PAO1).